A 288-amino-acid chain; its full sequence is N-acetyltransferase ECO1 (288 aa).

The interval 1 to 50 (MKRDITQLLSPELSQSSSRNDKKRKPTNSNKKVQTVLNFPSSSPNASQST) is disordered. The span at 7–18 (QLLSPELSQSSS) shows a compositional bias: low complexity. The segment covering 27 to 50 (TNSNKKVQTVLNFPSSSPNASQST) has biased composition (polar residues). Residues 50-74 (TTCPTCGMTYYSHVSKDNDVHNKYH) form a CCHH-type zinc finger.

The protein belongs to the acetyltransferase family. ECO subfamily.

The protein resides in the nucleus. In terms of biological role, probable acetyltransferase required for the establishment of sister chromatid cohesion and couple the processes of cohesion and DNA replication to ensure that only sister chromatids become paired together. In contrast to the structural cohesins, the deposition and establishment factors are required only during S phase. Acts by acetylating the cohesin complex component SMC3. The polypeptide is N-acetyltransferase ECO1 (ECO1) (Debaryomyces hansenii (strain ATCC 36239 / CBS 767 / BCRC 21394 / JCM 1990 / NBRC 0083 / IGC 2968) (Yeast)).